Consider the following 136-residue polypeptide: Cell wall synthesis protein CwsA (136 aa).

Residues 94 to 114 (LLIAAVAVTVLGGGAAAFSIV) form a helical membrane-spanning segment.

Belongs to the CwsA family. Interacts with CrgA and Wag31.

The protein localises to the cell membrane. Functionally, required for regulated cell division, cell wall synthesis and the maintenance of cell shape. The sequence is that of Cell wall synthesis protein CwsA from Mycolicibacterium smegmatis (strain ATCC 700084 / mc(2)155) (Mycobacterium smegmatis).